We begin with the raw amino-acid sequence, 271 residues long: Expansin-B1 (271 aa).

The N-terminal stretch at 1-24 (MQLFPVILPTLCVFLHLLISGSGS) is a signal peptide. One can recognise an Expansin-like EG45 domain in the interval 58 to 169 (GGACGYGSLV…RRTACKYRGK (112 aa)). Disulfide bonds link Cys61/Cys90, Cys93/Cys164, and Cys98/Cys104. The Expansin-like CBD domain occupies 182 to 263 (YWLSLLIEYE…NWVPKATYTS (82 aa)). A glycan (N-linked (GlcNAc...) asparagine) is linked at Asn242.

The protein belongs to the expansin family. Expansin B subfamily.

It localises to the secreted. It is found in the cell wall. The protein resides in the membrane. Functionally, may cause loosening and extension of plant cell walls by disrupting non-covalent bonding between cellulose microfibrils and matrix glucans. No enzymatic activity has been found. This chain is Expansin-B1 (EXPB1), found in Arabidopsis thaliana (Mouse-ear cress).